The sequence spans 194 residues: Large ribosomal subunit protein eL15 (194 aa).

The segment at 161 to 194 is disordered; sequence GLTSAGKKGRGLMYKGKGAEKARPSVRANGKKTK.

It belongs to the eukaryotic ribosomal protein eL15 family.

This is Large ribosomal subunit protein eL15 from Methanococcus maripaludis (strain C5 / ATCC BAA-1333).